Here is a 153-residue protein sequence, read N- to C-terminus: SsrA-binding protein (153 aa).

It belongs to the SmpB family.

It is found in the cytoplasm. Required for rescue of stalled ribosomes mediated by trans-translation. Binds to transfer-messenger RNA (tmRNA), required for stable association of tmRNA with ribosomes. tmRNA and SmpB together mimic tRNA shape, replacing the anticodon stem-loop with SmpB. tmRNA is encoded by the ssrA gene; the 2 termini fold to resemble tRNA(Ala) and it encodes a 'tag peptide', a short internal open reading frame. During trans-translation Ala-aminoacylated tmRNA acts like a tRNA, entering the A-site of stalled ribosomes, displacing the stalled mRNA. The ribosome then switches to translate the ORF on the tmRNA; the nascent peptide is terminated with the 'tag peptide' encoded by the tmRNA and targeted for degradation. The ribosome is freed to recommence translation, which seems to be the essential function of trans-translation. In Desulforudis audaxviator (strain MP104C), this protein is SsrA-binding protein.